The chain runs to 265 residues: Tryptophan synthase alpha chain (265 aa).

Active-site proton acceptor residues include glutamate 49 and glutamate 60.

This sequence belongs to the TrpA family. In terms of assembly, tetramer of two alpha and two beta chains.

It carries out the reaction (1S,2R)-1-C-(indol-3-yl)glycerol 3-phosphate + L-serine = D-glyceraldehyde 3-phosphate + L-tryptophan + H2O. It participates in amino-acid biosynthesis; L-tryptophan biosynthesis; L-tryptophan from chorismate: step 5/5. Functionally, the alpha subunit is responsible for the aldol cleavage of indoleglycerol phosphate to indole and glyceraldehyde 3-phosphate. The protein is Tryptophan synthase alpha chain of Herminiimonas arsenicoxydans.